A 257-amino-acid polypeptide reads, in one-letter code: E3 ubiquitin-protein ligase RNF170 (257 aa).

The Lumenal portion of the chain corresponds to 1–24; the sequence is MADNQEERPHFPLDEGSIIEGVSD. A helical membrane pass occupies residues 25–45; it reads QVIVVVLLSFVAVGSLIYLLL. The Cytoplasmic segment spans residues 46–200; the sequence is RNDEQNIHPE…GGLFWMFRIR (155 aa). Residues 87–130 form an RING-type zinc finger; the sequence is CPVCLQQATFPVETNCGHLFCGSCIIAYWRYGTWLGAINCPICR. A helical transmembrane segment spans residues 201 to 221; that stretch reads IVLCLLGALLYLVSPLDIIPE. Residue A222 is a topological domain, lumenal. The helical transmembrane segment at 223–243 threads the bilayer; that stretch reads LFGILGFLDDLFVLFLLLIYI. Topologically, residues 244 to 257 are cytoplasmic; the sequence is SIMYREVVTQRLYR.

Its subcellular location is the endoplasmic reticulum membrane. It carries out the reaction S-ubiquitinyl-[E2 ubiquitin-conjugating enzyme]-L-cysteine + [acceptor protein]-L-lysine = [E2 ubiquitin-conjugating enzyme]-L-cysteine + N(6)-ubiquitinyl-[acceptor protein]-L-lysine.. Its pathway is protein modification; protein ubiquitination. Its function is as follows. E3 ubiquitin-protein ligase that plays an essential role in stimulus-induced inositol 1,4,5-trisphosphate receptor (ITPR) ubiquitination and degradation via the endoplasmic reticulum-associated degradation (ERAD) pathway. Also involved in ITPR turnover in resting cells. This chain is E3 ubiquitin-protein ligase RNF170 (rnf170), found in Xenopus laevis (African clawed frog).